The following is a 566-amino-acid chain: Branchpoint-bridging protein (566 aa).

The span at 1–14 (MAWRNQGITGSNNI) shows a compositional bias: polar residues. Residues 1–77 (MAWRNQGITG…NRWGDAQENK (77 aa)) are disordered. The 81-residue stretch at 186-266 (YVPVNDYPEI…EKVNKAKKLV (81 aa)) folds into the KH domain. 2 consecutive CCHC-type zinc fingers follow at residues 304-321 (QACQ…DCPE) and 329-346 (IICR…DCPD). Over residues 341 to 352 (ARDCPDRQRGSD) the composition is skewed to basic and acidic residues. 2 disordered regions span residues 341 to 367 (ARDC…RAIG) and 382 to 566 (ELSG…PPSA). The segment covering 355–364 (NGGGYGGGRR) has biased composition (gly residues). 2 stretches are compositionally biased toward basic and acidic residues: residues 394–413 (PPRR…DVKP) and 429–441 (RGRD…DYGS). Over residues 457 to 472 (GDYGYGSHAGGYGAPG) the composition is skewed to gly residues. Low complexity-rich tracts occupy residues 473-486 (AGAA…WHQQ) and 494-513 (GASA…VPGM). 2 stretches are compositionally biased toward pro residues: residues 517-531 (GAPP…PPGM) and 540-566 (SPPP…PPSA).

The protein belongs to the BBP/SF1 family.

It localises to the nucleus. Necessary for the splicing of pre-mRNA. Has a role in the recognition of the branch site (5'-UACUAAC-3'), the pyrimidine tract and the 3'-splice site at the 3'-end of introns. The polypeptide is Branchpoint-bridging protein (bbp) (Aspergillus fumigatus (strain ATCC MYA-4609 / CBS 101355 / FGSC A1100 / Af293) (Neosartorya fumigata)).